Reading from the N-terminus, the 225-residue chain is 2-C-methyl-D-erythritol 4-phosphate cytidylyltransferase (225 aa).

It belongs to the IspD/TarI cytidylyltransferase family. IspD subfamily.

It catalyses the reaction 2-C-methyl-D-erythritol 4-phosphate + CTP + H(+) = 4-CDP-2-C-methyl-D-erythritol + diphosphate. It participates in isoprenoid biosynthesis; isopentenyl diphosphate biosynthesis via DXP pathway; isopentenyl diphosphate from 1-deoxy-D-xylulose 5-phosphate: step 2/6. Catalyzes the formation of 4-diphosphocytidyl-2-C-methyl-D-erythritol from CTP and 2-C-methyl-D-erythritol 4-phosphate (MEP). The protein is 2-C-methyl-D-erythritol 4-phosphate cytidylyltransferase of Chromobacterium violaceum (strain ATCC 12472 / DSM 30191 / JCM 1249 / CCUG 213 / NBRC 12614 / NCIMB 9131 / NCTC 9757 / MK).